A 154-amino-acid chain; its full sequence is Transcription antitermination protein NusB (154 aa).

Belongs to the NusB family.

Involved in transcription antitermination. Required for transcription of ribosomal RNA (rRNA) genes. Binds specifically to the boxA antiterminator sequence of the ribosomal RNA (rrn) operons. This is Transcription antitermination protein NusB from Bordetella parapertussis (strain 12822 / ATCC BAA-587 / NCTC 13253).